A 128-amino-acid polypeptide reads, in one-letter code: UPF0325 protein YaeH (128 aa).

Belongs to the UPF0325 family.

This is UPF0325 protein YaeH from Escherichia coli (strain ATCC 8739 / DSM 1576 / NBRC 3972 / NCIMB 8545 / WDCM 00012 / Crooks).